Here is a 200-residue protein sequence, read N- to C-terminus: MEVIKAEFIKSAVKPKDYPLETLPEVAFVGRSNVGKSSLINVLANRKSLVRTSSTPGRTQLINFFDINGVLTLVDLPGYGYAKAPPDVRKQWGPMIETYLARRGNLRAVVLILDIRRIPSDGDLQMLGWLETYDIPPIFVLTKCDKLSKVERAKQTALIASAIKRDRNELLHFSALSRDGRDAVWKEVLRLTLAQEEERI.

Positions 22-194 (TLPEVAFVGR…WKEVLRLTLA (173 aa)) constitute an EngB-type G domain. GTP-binding positions include 30–37 (GRSNVGKS), 57–61 (GRTQL), 75–78 (DLPG), 142–145 (TKCD), and 173–175 (FSA). 2 residues coordinate Mg(2+): S37 and T59.

Belongs to the TRAFAC class TrmE-Era-EngA-EngB-Septin-like GTPase superfamily. EngB GTPase family. Mg(2+) is required as a cofactor.

Necessary for normal cell division and for the maintenance of normal septation. This is Probable GTP-binding protein EngB from Pelobacter propionicus (strain DSM 2379 / NBRC 103807 / OttBd1).